The sequence spans 60 residues: UPF0337 protein asr1134 (60 aa).

Basic and acidic residues-rich tracts occupy residues 1 to 18 and 29 to 60; these read MSLE…EGKA and PEDK…KKID. Residues 1–60 form a disordered region; that stretch reads MSLEDRAKATGKNIEGKAQEALGNVTGDPEDKAEGKAKQAESEVRHGVEDVKDNVKKKID.

Belongs to the UPF0337 (CsbD) family.

This chain is UPF0337 protein asr1134, found in Nostoc sp. (strain PCC 7120 / SAG 25.82 / UTEX 2576).